The chain runs to 545 residues: T-complex protein 1 subunit alpha (545 aa).

Serine 2 is subject to N-acetylserine.

This sequence belongs to the TCP-1 chaperonin family. Heterooligomeric complex of about 850 to 900 kDa that forms two stacked rings, 12 to 16 nm in diameter.

Its subcellular location is the cytoplasm. Functionally, molecular chaperone; assists the folding of proteins upon ATP hydrolysis. Known to play a role, in vitro, in the folding of actin and tubulin. The polypeptide is T-complex protein 1 subunit alpha (Arabidopsis thaliana (Mouse-ear cress)).